Here is a 740-residue protein sequence, read N- to C-terminus: Phosphoribosylformylglycinamidine synthase subunit PurL (740 aa).

H49 is an active-site residue. ATP contacts are provided by Y52 and K91. Residue E93 participates in Mg(2+) binding. Residues 94 to 97 (SHNH) and R116 contribute to the substrate site. Residue H95 is the Proton acceptor of the active site. D117 is a Mg(2+) binding site. Residue Q245 participates in substrate binding. D273 provides a ligand contact to Mg(2+). Residue 317–319 (ESQ) coordinates substrate. The ATP site is built by D501 and G538. A Mg(2+)-binding site is contributed by N539. Position 541 (S541) interacts with substrate.

It belongs to the FGAMS family. In terms of assembly, monomer. Part of the FGAM synthase complex composed of 1 PurL, 1 PurQ and 2 PurS subunits.

The protein resides in the cytoplasm. The enzyme catalyses N(2)-formyl-N(1)-(5-phospho-beta-D-ribosyl)glycinamide + L-glutamine + ATP + H2O = 2-formamido-N(1)-(5-O-phospho-beta-D-ribosyl)acetamidine + L-glutamate + ADP + phosphate + H(+). It functions in the pathway purine metabolism; IMP biosynthesis via de novo pathway; 5-amino-1-(5-phospho-D-ribosyl)imidazole from N(2)-formyl-N(1)-(5-phospho-D-ribosyl)glycinamide: step 1/2. Its function is as follows. Part of the phosphoribosylformylglycinamidine synthase complex involved in the purines biosynthetic pathway. Catalyzes the ATP-dependent conversion of formylglycinamide ribonucleotide (FGAR) and glutamine to yield formylglycinamidine ribonucleotide (FGAM) and glutamate. The FGAM synthase complex is composed of three subunits. PurQ produces an ammonia molecule by converting glutamine to glutamate. PurL transfers the ammonia molecule to FGAR to form FGAM in an ATP-dependent manner. PurS interacts with PurQ and PurL and is thought to assist in the transfer of the ammonia molecule from PurQ to PurL. This chain is Phosphoribosylformylglycinamidine synthase subunit PurL, found in Sulfurovum sp. (strain NBC37-1).